We begin with the raw amino-acid sequence, 377 residues long: tRNA-splicing endonuclease subunit SEN2 (377 aa).

Positions 119-174 (ETEMTLEKVTQQRRLQRLEFKKERAKLERELLELRKKGGHIDEENILLEKQRESLR) form a coiled coil. Catalysis depends on residues tyrosine 289, histidine 297, and lysine 328.

It belongs to the tRNA-intron endonuclease family. Heterotetramer composed of SEN2, SEN15, SEN34 and SEN54. Interacts directly with SEN54.

Its subcellular location is the nucleus. The protein localises to the endomembrane system. The protein resides in the mitochondrion outer membrane. It carries out the reaction pretRNA = a 3'-half-tRNA molecule with a 5'-OH end + a 5'-half-tRNA molecule with a 2',3'-cyclic phosphate end + an intron with a 2',3'-cyclic phosphate and a 5'-hydroxyl terminus.. In terms of biological role, constitutes one of the two catalytic subunit of the tRNA-splicing endonuclease complex, a complex responsible for identification and cleavage of the splice sites in pre-tRNA. It cleaves pre-tRNA at the 5'- and 3'-splice sites to release the intron. The products are an intron and two tRNA half-molecules bearing 2',3'-cyclic phosphate and 5'-OH termini. There are no conserved sequences at the splice sites, but the intron is invariably located at the same site in the gene, placing the splice sites an invariant distance from the constant structural features of the tRNA body. This subunit may anchor the endonuclease complex to the nuclear membrane. Probably carries the active site for 5'-splice site cleavage. The chain is tRNA-splicing endonuclease subunit SEN2 (SEN2) from Saccharomyces cerevisiae (strain ATCC 204508 / S288c) (Baker's yeast).